The following is a 1310-amino-acid chain: Major viral transcription factor ICP4 homolog (1310 aa).

Disordered stretches follow at residues 117–271 (AGAR…GPVE), 285–454 (GAKA…TPII), and 636–696 (GSSP…SLLD). Basic and acidic residues predominate over residues 341–350 (PVEKKPKSRE). Composition is skewed to low complexity over residues 351–364 (FVSS…WGSS), 392–407 (PSPS…DGGS), and 648–666 (PSPT…SAAA). The Nuclear localization signal motif lies at 677-685 (RLRTPRKRK). Phosphoserine; by VZV ORF66 is present on residues Ser686 and Ser722. 2 disordered regions span residues 1195–1258 (RFVF…SFGV) and 1282–1310 (ELLS…QSRG). Residues 1217–1227 (RTADDREHALE) are compositionally biased toward basic and acidic residues. Residues 1228–1250 (PDDWEVGCEDAWDSEEGGGDDGD) are compositionally biased toward acidic residues.

The protein belongs to the herpesviridae ICP4 family. As to quaternary structure, interacts with IE4 and IE63. Interacts with human USF1 and SP1. Phosphorylated by ORF66 protein kinase on Ser-686 and Ser-722. Also phosphorylated by ORF47 protein kinase and by human CSNK2A1/CKII.

The protein localises to the host nucleus. Its subcellular location is the host cytoplasm. It localises to the virion tegument. Its function is as follows. Transcriptional transactivator. May interact with and recruit specific components of the general transcription machinery to viral promoters and stabilize their formation for transcription initiation. Negatively regulates its own transcription. This immediate early (EI) protein may be necessary in virion for viral pathogenesis. This Homo sapiens (Human) protein is Major viral transcription factor ICP4 homolog.